A 552-amino-acid polypeptide reads, in one-letter code: (R)-mandelonitrile lyase-like (552 aa).

The first 28 residues, 1–28 (MTKRIDSSLLYTALVVLLLLGVVHRSNA), serve as a signal peptide directing secretion. N-linked (GlcNAc...) asparagine glycosylation occurs at Asn-44. 55-82 (DYIIVGGGTAGCPLAATLSQSFRVLLLE) lines the FAD pocket. N-linked (GlcNAc...) asparagine glycans are attached at residues Asn-162, Asn-259, and Asn-434. Catalysis depends on His-492, which acts as the Proton acceptor.

The protein belongs to the GMC oxidoreductase family. Monomer. Requires FAD as cofactor. Glycosylated.

The enzyme catalyses (R)-mandelonitrile = benzaldehyde + hydrogen cyanide. This Arabidopsis thaliana (Mouse-ear cress) protein is (R)-mandelonitrile lyase-like.